The following is a 435-amino-acid chain: MNAFTPREIVSELDRHIVGQKDAKRAVAIALRNRWRRQQLSEALRDEVLPKNILMIGPTGVGKTEIARRLAKLAQAPFLKVEATKFTEVGYVGRDVESIIRDLVETALTQERDRLRKQVNAKAEANAEERVLDALVGDRASPETRQKFRKMLREGQINDKEIEVQVQDSGGALPTMDIPGMPGAQMGMLNLNDIFGKAFGNRTKARKMTVEDSHAVLVREEADKLLDEEQVVKAAIAAVENNGIVFLDEIDKIATASERRGGDVSREGVQRDLLPLIEGTTVSTKYGPVKTDHVLFIASGAFHTAKPADLLPELQGRLPIRVELSALNAGDFKRILLEPEASLITQYKALLATEGVTLEFPDDTVEAIAEIATEINGSVENIGARRLHTVLERLLEEISFTATDRSGETIVVTRDMVKERVGALAAKADLSRFIL.

ATP is bound by residues V18, 60–65, D248, E313, and R385; that span reads GVGKTE.

Belongs to the ClpX chaperone family. HslU subfamily. In terms of assembly, a double ring-shaped homohexamer of HslV is capped on each side by a ring-shaped HslU homohexamer. The assembly of the HslU/HslV complex is dependent on binding of ATP.

The protein localises to the cytoplasm. In terms of biological role, ATPase subunit of a proteasome-like degradation complex; this subunit has chaperone activity. The binding of ATP and its subsequent hydrolysis by HslU are essential for unfolding of protein substrates subsequently hydrolyzed by HslV. HslU recognizes the N-terminal part of its protein substrates and unfolds these before they are guided to HslV for hydrolysis. The protein is ATP-dependent protease ATPase subunit HslU of Rhodospirillum rubrum (strain ATCC 11170 / ATH 1.1.1 / DSM 467 / LMG 4362 / NCIMB 8255 / S1).